The sequence spans 793 residues: MELRPWLLWVVAAAGALVLLAAEARGQKIFTNTWAVHISGGPAVADSVARKHGFHNLGQIFGDYYHFWHRAVTKRSLSPHRPRHSRLQRVPQVKWLEQQVAKQRAKRDVYQEPTDPKFPQQWYLSGVTQRDLNVKEAWAQGFTGRGIVVSILDDGIEKNHPDLAGNYDPGASFDVNDQDPDPQPRYTQMNDNRHGTRCAGEVAAVANNGVCGVGVAYNARIGGVRMLDGEVTDAVEARSLGLNPNHIHIYSASWGPEDDGKTVDGPARLAEEAFFRGVSQGRGGLGSIFVWASGNGGREHDSCNCDGYTNSIYTLSISSATQFGNVPWYSEACSSTLATTYSSGNQNEKQIVTTDLRQKCTESHTGTSASAPLAAGIIALTLEANKNLTWRDMQHLVVQTSKPAHLNANDWATNGVGRKVSHSYGYGLLDAGAMVALAQNWTTVAPQRKCIIEILAEPKDIGKRLEVRKTVTACLGEPNHISRLEHVQARLTLSYNRRGDLAIHLISPMGTRSTLLAARPHDYSADGFNDWAFMTTHSWDEDPSGEWVLEIENTSEANNYGTLTKFTLVLYGTASEGLSAPPESSGCKTLTSSQACVVCEEGFSLHQKSCVQRCPPGFTPQVLDTHYSTENDVEIIRASVCTPCHASCATCQGPAPTDCLSCPSHASLDPVEQTCSRQSQSSRESRPQQPPPALRPEVEVEPRLRAGLASHLPEVLAGLSCLIIALIFGIVFLFLHRCSGFSFRGVKVYTMDRGLISYKGLPPEAWQEECPSDSEEDEGRGERTAFIKDQSAL.

Residues 1 to 26 (MELRPWLLWVVAAAGALVLLAAEARG) form the signal peptide. A propeptide spans 27–107 (QKIFTNTWAV…QQVAKQRAKR (81 aa)) (inhibition peptide). The Lumenal segment spans residues 108 to 714 (DVYQEPTDPK…RAGLASHLPE (607 aa)). D115 provides a ligand contact to Ca(2+). One can recognise a Peptidase S8 domain in the interval 121-435 (QWYLSGVTQR…YGLLDAGAMV (315 aa)). D153 serves as the catalytic Charge relay system. D154 is a binding site for substrate. Residues 160–186 (HPDLAGNYDPGASFDVNDQDPDPQPRY) form a disordered region. The Ca(2+) site is built by D162, D174, D179, and D181. 191–192 (DN) provides a ligand contact to substrate. The active-site Charge relay system is H194. Ca(2+)-binding residues include V205, N208, V210, and G212. 2 disulfides stabilise this stretch: C211-C360 and C303-C333. Substrate is bound by residues E236, 253-258 (SWGPED), D264, and 292-295 (ASGN). Ca(2+) is bound at residue D258. Ca(2+) is bound at residue D301. D306 and Y308 together coordinate substrate. Residue E331 coordinates Ca(2+). S368 (charge relay system) is an active-site residue. S368 provides a ligand contact to substrate. 2 N-linked (GlcNAc...) asparagine glycosylation sites follow: N387 and N440. The 133-residue stretch at 444–576 (VAPQRKCIIE…TLVLYGTASE (133 aa)) folds into the P/Homo B domain. Residues C450 and C474 are joined by a disulfide bond. The Cell attachment site motif lies at 498-500 (RGD). A glycan (N-linked (GlcNAc...) asparagine) is linked at N553. FU repeat units lie at residues 577-620 (GLSA…GFTP) and 638-681 (ASVC…QSQS). The interval 673–698 (QTCSRQSQSSRESRPQQPPPALRPEV) is disordered. The helical transmembrane segment at 715–735 (VLAGLSCLIIALIFGIVFLFL) threads the bilayer. Residues 736–793 (HRCSGFSFRGVKVYTMDRGLISYKGLPPEAWQEECPSDSEEDEGRGERTAFIKDQSAL) lie on the Cytoplasmic side of the membrane. The cell surface signal stretch occupies residues 758–761 (YKGL). Positions 766-779 (WQEECPSDSEEDEG) are enriched in acidic residues. Residues 766-793 (WQEECPSDSEEDEGRGERTAFIKDQSAL) form a disordered region. 2 positions are modified to phosphoserine: S772 and S774. Residues 772–778 (SDSEEDE) carry the Trans Golgi network signal motif.

This sequence belongs to the peptidase S8 family. Furin subfamily. In terms of assembly, interacts with FLNA. Binds to PACS1 which mediates TGN localization and connection to clathrin adapters. Requires Ca(2+) as cofactor. The inhibition peptide, which plays the role of an intramolecular chaperone, is autocatalytically removed in the endoplasmic reticulum (ER) and remains non-covalently bound to furin as a potent autoinhibitor. Following transport to the trans Golgi, a second cleavage within the inhibition propeptide results in propeptide dissociation and furin activation. Post-translationally, phosphorylation is required for TGN localization of the endoprotease. In vivo, exists as di-, mono- and non-phosphorylated forms. As to expression, cardiocytes (at protein level).

Its subcellular location is the golgi apparatus. The protein localises to the trans-Golgi network membrane. The protein resides in the cell membrane. It localises to the secreted. It is found in the endosome membrane. It carries out the reaction Release of mature proteins from their proproteins by cleavage of -Arg-Xaa-Yaa-Arg-|-Zaa- bonds, where Xaa can be any amino acid and Yaa is Arg or Lys. Releases albumin, complement component C3 and von Willebrand factor from their respective precursors.. Its activity is regulated as follows. Inhibited by the not secondly cleaved propeptide. Inhibited by m-guanidinomethyl-phenylacetyl-Arg-Val-Arg-(amidomethyl)-benzamidine (m-guanidinomethyl-Phac-RVR-Amb) and 4-guanidinomethyl-phenylacetyl-Arg-Tle-Arg-4-amidinobenzylamide (MI-1148). Inhibited by Decanoyl-Arg-Val-Lys-Arg-chloromethylketone (decanoyl-RVKR-CMK). Inhibited by heparin/heparan sulfate-binding. Functionally, ubiquitous endoprotease within constitutive secretory pathways capable of cleavage at the RX(K/R)R consensus motif. Mediates processing of TGFB1, an essential step in TGF-beta-1 activation. Converts through proteolytic cleavage the non-functional Brain natriuretic factor prohormone into its active hormone BNP(1-45). By mediating processing of accessory subunit ATP6AP1/Ac45 of the V-ATPase, regulates the acidification of dense-core secretory granules in islets of Langerhans cells. This chain is Furin (Furin), found in Rattus norvegicus (Rat).